The following is a 396-amino-acid chain: Gap junction gamma-1 protein (396 aa).

Residues 1–22 (MSWSFLTRLLEEIHNHSTFVGK) lie on the Cytoplasmic side of the membrane. A helical transmembrane segment spans residues 23–45 (IWLTVLIAFRIALTAVGGESIYY). Topologically, residues 46–75 (DEQSKFVCNTEQPGCENVCYDAFAPLSHVR) are extracellular. The helical transmembrane segment at 76 to 95 (FWVFQIILVATPSVMYLGYA) threads the bilayer. Residues 96–175 (IHKIAKMEHG…RRIREDGLMK (80 aa)) lie on the Cytoplasmic side of the membrane. The interval 145–165 (ELESEKENKEQNQPKPKHDGR) is disordered. Residues 147–156 (ESEKENKEQN) show a composition bias toward basic and acidic residues. A helical membrane pass occupies residues 176 to 198 (IYVLQLLARTVFEVGFLIGQYFL). Over 199–228 (YGFQVHPFYVCSRLPCPHKIDCFISRPTEK) the chain is Extracellular. Residues 229–248 (TIFLLIMYGVTGLCLLLNIW) traverse the membrane as a helical segment. Over 249–396 (EMLHLGFGTI…SGDGKNSVWI (148 aa)) the chain is Cytoplasmic. The segment at 355–396 (AYSHQNNPHGPREKKAKVGSKAGSNKSSASSKSGDGKNSVWI) is disordered. The segment covering 373–396 (GSKAGSNKSSASSKSGDGKNSVWI) has biased composition (low complexity).

This sequence belongs to the connexin family. Gamma-type subfamily. As to quaternary structure, a connexon is composed of a hexamer of connexins. Interacts with CNST.

The protein resides in the cell membrane. It localises to the cell junction. Its subcellular location is the gap junction. Functionally, one gap junction consists of a cluster of closely packed pairs of transmembrane channels, the connexons, through which materials of low MW diffuse from one cell to a neighboring cell. This is Gap junction gamma-1 protein (GJC1) from Canis lupus familiaris (Dog).